We begin with the raw amino-acid sequence, 339 residues long: Ketol-acid reductoisomerase (NADP(+)) (339 aa).

One can recognise a KARI N-terminal Rossmann domain in the interval 1 to 182 (MRVYYDRDAD…GGGRSGIIET (182 aa)). NADP(+) contacts are provided by residues 24-27 (YGSQ), Lys-48, Ser-51, Thr-53, and 83-86 (DELQ). His-108 is a catalytic residue. Residue Gly-134 participates in NADP(+) binding. One can recognise a KARI C-terminal knotted domain in the interval 183–328 (NFKEECETDL…AKLRGMMPWI (146 aa)). Mg(2+) is bound by residues Asp-191, Glu-195, Glu-227, and Glu-231. Ser-252 contributes to the substrate binding site.

The protein belongs to the ketol-acid reductoisomerase family. Mg(2+) serves as cofactor.

It catalyses the reaction (2R)-2,3-dihydroxy-3-methylbutanoate + NADP(+) = (2S)-2-acetolactate + NADPH + H(+). The enzyme catalyses (2R,3R)-2,3-dihydroxy-3-methylpentanoate + NADP(+) = (S)-2-ethyl-2-hydroxy-3-oxobutanoate + NADPH + H(+). It participates in amino-acid biosynthesis; L-isoleucine biosynthesis; L-isoleucine from 2-oxobutanoate: step 2/4. Its pathway is amino-acid biosynthesis; L-valine biosynthesis; L-valine from pyruvate: step 2/4. Its function is as follows. Involved in the biosynthesis of branched-chain amino acids (BCAA). Catalyzes an alkyl-migration followed by a ketol-acid reduction of (S)-2-acetolactate (S2AL) to yield (R)-2,3-dihydroxy-isovalerate. In the isomerase reaction, S2AL is rearranged via a Mg-dependent methyl migration to produce 3-hydroxy-3-methyl-2-ketobutyrate (HMKB). In the reductase reaction, this 2-ketoacid undergoes a metal-dependent reduction by NADPH to yield (R)-2,3-dihydroxy-isovalerate. The chain is Ketol-acid reductoisomerase (NADP(+)) from Sinorhizobium medicae (strain WSM419) (Ensifer medicae).